Here is a 1168-residue protein sequence, read N- to C-terminus: TBC1 domain family member 1 (1168 aa).

Serine 146 carries the phosphoserine modification. The tract at residues 203 to 238 (VSGSRGSESPRPNPPHAAPTGSQEPVRRPMRKSFSQ) is disordered. Residue serine 235 is modified to Phosphoserine; by PKB/AKT1. Serine 237 is modified (phosphoserine). In terms of domain architecture, PID spans 246–404 (FRKELQDGGL…LHKLCERIEG (159 aa)). Position 503 is a phosphoserine (serine 503). Threonine 505 is modified (phosphothreonine; by PKB/AKT1). 3 positions are modified to phosphoserine: serine 507, serine 525, and serine 527. Over residues 532 to 542 (SSLSSTLSNTS) the composition is skewed to low complexity. Disordered stretches follow at residues 532-551 (SSLS…CEKE) and 564-587 (GSSE…LSPQ). A phosphoserine mark is found at serine 565, serine 566, serine 570, serine 571, and serine 585. Threonine 596 carries the phosphothreonine modification. Residue serine 614 is modified to Phosphoserine. Phosphoserine; by PKB/AKT1 is present on serine 627. 2 disordered regions span residues 628 to 658 (VSTE…KTRR) and 678 to 717 (SSSR…KRTS). Residues 632 to 645 (TPHERKDFESKANH) show a composition bias toward basic and acidic residues. Residues serine 695 and serine 941 each carry the phosphoserine modification. Residues 800–994 (GVPRHHRGEI…RVFDMIFLQG (195 aa)) form the Rab-GAP TBC domain. Position 952 is a phosphotyrosine (tyrosine 952). Threonine 1131 carries the phosphothreonine modification. A compositionally biased stretch (basic and acidic residues) spans 1145–1159 (ELRRRSAEPSDREPE). A disordered region spans residues 1145–1168 (ELRRRSAEPSDREPECTQPEPTGD).

As to quaternary structure, interacts with APPL2 (via BAR domain); interaction is dependent of TBC1D1 phosphorylation at Ser-235; interaction diminishes the phosphorylation of TBC1D1 at Thr-596, resulting in inhibition of SLC2A4/GLUT4 translocation and glucose uptake. In terms of processing, insulin-stimulated phosphorylation by AKT family kinases stimulates SLC2A4/GLUT4 translocation.

The protein localises to the nucleus. Its function is as follows. May act as a GTPase-activating protein for Rab family protein(s). May play a role in the cell cycle and differentiation of various tissues. Involved in the trafficking and translocation of GLUT4-containing vesicles and insulin-stimulated glucose uptake into cells. The polypeptide is TBC1 domain family member 1 (TBC1D1) (Homo sapiens (Human)).